A 985-amino-acid polypeptide reads, in one-letter code: Phosphoenolpyruvate carboxylase (985 aa).

A compositionally biased stretch (low complexity) spans 1-17 (MTQSAARRASSRATPAR). Positions 1 to 55 (MTQSAARRASSRATPARKTPPAPASQTPAPSPGGTAGTALGPTSRRSSGSAAAKD) are disordered. Active-site residues include His193 and Lys634.

Belongs to the PEPCase type 1 family. Requires Mg(2+) as cofactor.

It catalyses the reaction oxaloacetate + phosphate = phosphoenolpyruvate + hydrogencarbonate. Its function is as follows. Forms oxaloacetate, a four-carbon dicarboxylic acid source for the tricarboxylic acid cycle. The polypeptide is Phosphoenolpyruvate carboxylase (Ralstonia nicotianae (strain ATCC BAA-1114 / GMI1000) (Ralstonia solanacearum)).